A 153-amino-acid polypeptide reads, in one-letter code: ORM1-like protein 1 (153 aa).

Over 1-26 (MNVGVAHSEVNPNTRVMNSRGMWLTY) the chain is Cytoplasmic. 2 helical membrane passes run 27 to 46 (ALGV…FSVP) and 47 to 64 (VAWT…YVFL). Topologically, residues 65-100 (HAVKGTPFETPDQGKARLLTHWEQLDYGVQFTSSRK) are cytoplasmic. The helical transmembrane segment at 101–121 (FFTISPIILYFLASFYTKYDP) threads the bilayer. Residues 122–123 (TH) lie on the Extracellular side of the membrane. The helical transmembrane segment at 124 to 140 (FILNTASLLSVLIPKMP) threads the bilayer. At 141 to 153 (QLHGVRIFGINKY) the chain is on the cytoplasmic side.

The protein belongs to the ORM family. In terms of assembly, ceramide-sensitive subunit of the serine palmitoyltransferase (SPT) complex, which is also composed of SPTLC1, SPTLC2/3 and SPTSSA/B. In terms of tissue distribution, widely expressed. Expressed in adult and fetal heart, brain, lung, liver, skeletal muscle and kidney. Expressed in adult pancreas and placenta and in fetal spleen abd thymus. Expressed at intermediate level in pancreas, placenta and brain but low in skeletal muscle and lung.

It is found in the endoplasmic reticulum membrane. Plays an essential role in the homeostatic regulation of sphingolipid de novo biosynthesis by modulating the activity of the serine palmitoyltransferase (SPT) in response to ceramide levels. When complexed to SPT, the binding of ceramides to its N-terminus stabilizes a conformation that block SPT substrate entry, hence preventing SPT catalytic activity. Through this mechanism, maintains ceramide levels at sufficient concentrations for the production of complex sphingolipids, but which prevents the accumulation of ceramides to levels that trigger apoptosis. This is ORM1-like protein 1 (ORMDL1) from Homo sapiens (Human).